A 272-amino-acid polypeptide reads, in one-letter code: 4-hydroxy-tetrahydrodipicolinate reductase (272 aa).

Residues 10–15, Glu36, 100–102, and 124–127 contribute to the NAD(+) site; these read GAGGRM, GTT, and SGNM. Residue His157 is the Proton donor/acceptor of the active site. His158 contacts (S)-2,3,4,5-tetrahydrodipicolinate. The Proton donor role is filled by Lys161. 167–168 is a (S)-2,3,4,5-tetrahydrodipicolinate binding site; the sequence is GT.

It belongs to the DapB family.

Its subcellular location is the cytoplasm. It carries out the reaction (S)-2,3,4,5-tetrahydrodipicolinate + NAD(+) + H2O = (2S,4S)-4-hydroxy-2,3,4,5-tetrahydrodipicolinate + NADH + H(+). The enzyme catalyses (S)-2,3,4,5-tetrahydrodipicolinate + NADP(+) + H2O = (2S,4S)-4-hydroxy-2,3,4,5-tetrahydrodipicolinate + NADPH + H(+). The protein operates within amino-acid biosynthesis; L-lysine biosynthesis via DAP pathway; (S)-tetrahydrodipicolinate from L-aspartate: step 4/4. Functionally, catalyzes the conversion of 4-hydroxy-tetrahydrodipicolinate (HTPA) to tetrahydrodipicolinate. This Bradyrhizobium sp. (strain ORS 278) protein is 4-hydroxy-tetrahydrodipicolinate reductase.